Reading from the N-terminus, the 198-residue chain is Guanylate kinase (198 aa).

A Guanylate kinase-like domain is found at 6-192 (KSIVIFTGPS…AAQEIREILH (187 aa)). Position 13–20 (13–20 (GPSGVGKG)) interacts with ATP.

Belongs to the guanylate kinase family.

The protein localises to the cytoplasm. It carries out the reaction GMP + ATP = GDP + ADP. In terms of biological role, essential for recycling GMP and indirectly, cGMP. The protein is Guanylate kinase of Mycoplasmopsis synoviae (strain 53) (Mycoplasma synoviae).